Consider the following 195-residue polypeptide: CASP-like protein 1B1 (195 aa).

Over 1-25 the chain is Cytoplasmic; that stretch reads MDLEKGKKPSEQAAACRIMQVKDKL. The helical transmembrane segment at 26–46 threads the bilayer; sequence ITLQPVVRACVFLATAVAAVI. The Extracellular portion of the chain corresponds to 47-78; that stretch reads MGLNKQSYTTVVAIVGTRPVTQTFTAKFKDTP. Residues 79 to 99 traverse the membrane as a helical segment; the sequence is AFVFFVIANAIASGYNLMVLV. Over 100–114 the chain is Cytoplasmic; that stretch reads TRRILQRRAQSLSVH. Residues 115-135 traverse the membrane as a helical segment; it reads LLDMVILTLLATGSATAASMA. The Extracellular segment spans residues 136-160; it reads QLGKNGNLHARWNPICDKFGSFCNH. A helical membrane pass occupies residues 161-181; the sequence is GGIALMSSFIGVALMLALNLL. Residues 182 to 195 are Cytoplasmic-facing; sequence SAAANSPRSNVTGQ.

This sequence belongs to the Casparian strip membrane proteins (CASP) family. In terms of assembly, homodimer and heterodimers.

It localises to the cell membrane. The sequence is that of CASP-like protein 1B1 from Oryza sativa subsp. indica (Rice).